The primary structure comprises 66 residues: Large ribosomal subunit protein bL31 (66 aa).

The Zn(2+) site is built by Cys-16, Cys-18, Cys-36, and Cys-39.

Belongs to the bacterial ribosomal protein bL31 family. Type A subfamily. Part of the 50S ribosomal subunit. Zn(2+) is required as a cofactor.

Binds the 23S rRNA. The polypeptide is Large ribosomal subunit protein bL31 (Campylobacter fetus subsp. fetus (strain 82-40)).